The sequence spans 294 residues: Glycine--tRNA ligase alpha subunit (294 aa).

Belongs to the class-II aminoacyl-tRNA synthetase family. Tetramer of two alpha and two beta subunits.

The protein localises to the cytoplasm. The enzyme catalyses tRNA(Gly) + glycine + ATP = glycyl-tRNA(Gly) + AMP + diphosphate. The polypeptide is Glycine--tRNA ligase alpha subunit (Polynucleobacter asymbioticus (strain DSM 18221 / CIP 109841 / QLW-P1DMWA-1) (Polynucleobacter necessarius subsp. asymbioticus)).